Here is a 61-residue protein sequence, read N- to C-terminus: Photosystem II reaction center protein K (61 aa).

A propeptide spanning residues 1 to 24 (MLNIFSLIWICLNSALYSSGFFFG) is cleaved from the precursor. The chain crosses the membrane as a helical span at residues 36-56 (IIDFMPVIPVFFFLLAFVWQA).

This sequence belongs to the PsbK family. As to quaternary structure, PSII is composed of 1 copy each of membrane proteins PsbA, PsbB, PsbC, PsbD, PsbE, PsbF, PsbH, PsbI, PsbJ, PsbK, PsbL, PsbM, PsbT, PsbX, PsbY, PsbZ, Psb30/Ycf12, at least 3 peripheral proteins of the oxygen-evolving complex and a large number of cofactors. It forms dimeric complexes.

It is found in the plastid. The protein resides in the chloroplast thylakoid membrane. One of the components of the core complex of photosystem II (PSII). PSII is a light-driven water:plastoquinone oxidoreductase that uses light energy to abstract electrons from H(2)O, generating O(2) and a proton gradient subsequently used for ATP formation. It consists of a core antenna complex that captures photons, and an electron transfer chain that converts photonic excitation into a charge separation. This is Photosystem II reaction center protein K from Coffea arabica (Arabian coffee).